We begin with the raw amino-acid sequence, 549 residues long: Glucose-6-phosphate isomerase (549 aa).

The active-site Proton donor is Glu355. Catalysis depends on residues His386 and Lys514.

Belongs to the GPI family.

The protein localises to the cytoplasm. The enzyme catalyses alpha-D-glucose 6-phosphate = beta-D-fructose 6-phosphate. Its pathway is carbohydrate biosynthesis; gluconeogenesis. The protein operates within carbohydrate degradation; glycolysis; D-glyceraldehyde 3-phosphate and glycerone phosphate from D-glucose: step 2/4. Catalyzes the reversible isomerization of glucose-6-phosphate to fructose-6-phosphate. The polypeptide is Glucose-6-phosphate isomerase (Buchnera aphidicola subsp. Acyrthosiphon pisum (strain 5A)).